A 198-amino-acid polypeptide reads, in one-letter code: Na(+)-translocating NADH-quinone reductase subunit E (198 aa).

6 helical membrane-spanning segments follow: residues Ser-11–Val-31, Val-35–Val-55, Phe-77–Ile-97, Gly-110–Val-130, Ile-140–Ile-160, and Leu-176–Val-196.

It belongs to the NqrDE/RnfAE family. In terms of assembly, composed of six subunits; NqrA, NqrB, NqrC, NqrD, NqrE and NqrF.

It localises to the cell inner membrane. The enzyme catalyses a ubiquinone + n Na(+)(in) + NADH + H(+) = a ubiquinol + n Na(+)(out) + NAD(+). Functionally, NQR complex catalyzes the reduction of ubiquinone-1 to ubiquinol by two successive reactions, coupled with the transport of Na(+) ions from the cytoplasm to the periplasm. NqrA to NqrE are probably involved in the second step, the conversion of ubisemiquinone to ubiquinol. This Histophilus somni (strain 2336) (Haemophilus somnus) protein is Na(+)-translocating NADH-quinone reductase subunit E.